The chain runs to 493 residues: MNKHASQPRAIYYVVALQIWEYFSFYGMRALLILYLTNQLKYNDTHAYELFSAYCSLVYVTPILGGFLADKVLGNRMAVMLGALLMAIGHVVLGASEIHPSFLYLSLAIIVCGYGLFKSNVSCLLGELYEPTDPRRDGGFSLMYAAGNVGSIIAPIACGYAQEEYSWAMGFGLAAVGMIAGLVIFLCGNRHFTHTRGVNKKVLRATNFLLPNWGWLLVLLVATPALITVLFWKEWSVYALIVATIIGLGVLAKIYRKAENQKQRKELRLIVTLTFFSMLFWAFAQQGGSSISLYIDRFVNRDMFGYTVPTAMFQSINAFAVMLCGVFLAWVVKESVAGNRTVRIWGKFALGLGLMSAGFCILTLSARWSAMYGHSSLPLMVLGLAVMGFAELFIDPVAMSQITRIEIPGVTGVLTGIYMLLSGAIANYLAGVIADQTSQASFDASGAINYSINAYIEVFDQITWGALACVGVVLMIWLYQALKFRNRALALES.

Over 1–13 (MNKHASQPRAIYY) the chain is Cytoplasmic. The chain crosses the membrane as a helical span at residues 14–34 (VVALQIWEYFSFYGMRALLIL). Over 35 to 48 (YLTNQLKYNDTHAY) the chain is Periplasmic. The chain crosses the membrane as a helical span at residues 49–69 (ELFSAYCSLVYVTPILGGFLA). Topologically, residues 70–77 (DKVLGNRM) are cytoplasmic. Residues 78 to 98 (AVMLGALLMAIGHVVLGASEI) traverse the membrane as a helical segment. The Periplasmic portion of the chain corresponds to 99 to 100 (HP). A helical membrane pass occupies residues 101–121 (SFLYLSLAIIVCGYGLFKSNV). At 122 to 137 (SCLLGELYEPTDPRRD) the chain is on the cytoplasmic side. The helical transmembrane segment at 138-158 (GGFSLMYAAGNVGSIIAPIAC) threads the bilayer. The Periplasmic portion of the chain corresponds to 159-166 (GYAQEEYS). Residues 167 to 187 (WAMGFGLAAVGMIAGLVIFLC) traverse the membrane as a helical segment. Residues 188–211 (GNRHFTHTRGVNKKVLRATNFLLP) are Cytoplasmic-facing. Residues 212–232 (NWGWLLVLLVATPALITVLFW) form a helical membrane-spanning segment. At 233–234 (KE) the chain is on the periplasmic side. A helical membrane pass occupies residues 235–255 (WSVYALIVATIIGLGVLAKIY). Over 256-268 (RKAENQKQRKELR) the chain is Cytoplasmic. A helical transmembrane segment spans residues 269-289 (LIVTLTFFSMLFWAFAQQGGS). The Periplasmic segment spans residues 290–311 (SISLYIDRFVNRDMFGYTVPTA). Residues 312–332 (MFQSINAFAVMLCGVFLAWVV) form a helical membrane-spanning segment. The Cytoplasmic portion of the chain corresponds to 333 to 343 (KESVAGNRTVR). The helical transmembrane segment at 344–364 (IWGKFALGLGLMSAGFCILTL) threads the bilayer. Residues 365–378 (SARWSAMYGHSSLP) are Periplasmic-facing. The helical transmembrane segment at 379–399 (LMVLGLAVMGFAELFIDPVAM) threads the bilayer. Residues 400–412 (SQITRIEIPGVTG) are Cytoplasmic-facing. The helical transmembrane segment at 413–433 (VLTGIYMLLSGAIANYLAGVI) threads the bilayer. The Periplasmic segment spans residues 434-461 (ADQTSQASFDASGAINYSINAYIEVFDQ). A helical membrane pass occupies residues 462–482 (ITWGALACVGVVLMIWLYQAL). Residues 483-493 (KFRNRALALES) are Cytoplasmic-facing.

This sequence belongs to the major facilitator superfamily. Proton-dependent oligopeptide transporter (POT/PTR) (TC 2.A.17) family. DtpD subfamily. In terms of assembly, monomer in solution. Exhibits a doughnut-like shape with a central, shallow depression and has a diameter of 8 nm.

The protein resides in the cell inner membrane. Probable proton-dependent permease that transports dipeptides. In Escherichia coli O157:H7, this protein is Dipeptide permease D (dtpD).